Reading from the N-terminus, the 318-residue chain is Lipid A biosynthesis acyltransferase (318 aa).

A helical membrane pass occupies residues 27–47; sequence PQYWGIWLGIFFLLLLAFVPF. Positions 145–150 match the HXXXXD motif motif; that stretch reads HGWAID.

The protein belongs to the LpxL/LpxM/LpxP family. LpxM subfamily.

It localises to the cell inner membrane. The enzyme catalyses an alpha-Kdo-(2-&gt;4)-alpha-Kdo-(2-&gt;6)-(acyl)-lipid IVA + a fatty acyl-[ACP] = an alpha-Kdo-(2-&gt;4)-alpha-Kdo-(2-&gt;6)-lipid A + holo-[ACP]. It functions in the pathway glycolipid biosynthesis; KDO(2)-lipid A biosynthesis; KDO(2)-lipid A from CMP-3-deoxy-D-manno-octulosonate and lipid IV(A): step 4/4. The protein operates within bacterial outer membrane biogenesis; lipopolysaccharide biosynthesis. Functionally, catalyzes the transfer of an acyl chain from an acyl-[acyl-carrier-protein] (ACP) to a Kdo(2)-(acyl)-lipid IV(A) to form a Kdo(2)-lipid A. In Haemophilus influenzae (strain ATCC 51907 / DSM 11121 / KW20 / Rd), this protein is Lipid A biosynthesis acyltransferase.